We begin with the raw amino-acid sequence, 305 residues long: Foldase protein PrsA (305 aa).

An N-terminal signal peptide occupies residues 1–19 (MKKWFIALAGLLLTVTLAG). The N-palmitoyl cysteine moiety is linked to residue cysteine 20. Cysteine 20 carries S-diacylglycerol cysteine lipidation. Positions 136–235 (EPEVSVAHIL…YGYHVILMLK (100 aa)) constitute a PpiC domain.

The protein belongs to the PrsA family.

The protein localises to the cell membrane. It carries out the reaction [protein]-peptidylproline (omega=180) = [protein]-peptidylproline (omega=0). Its function is as follows. Plays a major role in protein secretion by helping the post-translocational extracellular folding of several secreted proteins. The sequence is that of Foldase protein PrsA from Levilactobacillus brevis (strain ATCC 367 / BCRC 12310 / CIP 105137 / JCM 1170 / LMG 11437 / NCIMB 947 / NCTC 947) (Lactobacillus brevis).